The chain runs to 843 residues: Glycogen phosphorylase, brain form (843 aa).

At A2 the chain carries N-acetylalanine. A Phosphoserine; by PHK; in form phosphorylase A modification is found at S15. 3 residues coordinate AMP: D43, Y197, and R310. Y197 carries the post-translational modification Phosphotyrosine. Position 473 is a phosphotyrosine (Y473). K569 contributes to the pyridoxal 5'-phosphate binding site. Residues 677 to 678 (TG) are pyridoxal 5'-phosphate. K681 is subject to N6-(pyridoxal phosphate)lysine.

This sequence belongs to the glycogen phosphorylase family. Homodimer. Dimers associate into a tetramer to form the enzymatically active phosphorylase A. Pyridoxal 5'-phosphate is required as a cofactor. In terms of processing, phosphorylation of Ser-15 converts phosphorylase B (unphosphorylated) to phosphorylase A.

It catalyses the reaction [(1-&gt;4)-alpha-D-glucosyl](n) + phosphate = [(1-&gt;4)-alpha-D-glucosyl](n-1) + alpha-D-glucose 1-phosphate. With respect to regulation, activity of phosphorylase is controlled both by allosteric means (through the non-covalent binding of metabolites) and by covalent modification. Thus AMP allosterically activates, whereas ATP, ADP, and glucose-6-phosphate allosterically inhibit, phosphorylase B. Its function is as follows. Glycogen phosphorylase that regulates glycogen mobilization. Phosphorylase is an important allosteric enzyme in carbohydrate metabolism. Enzymes from different sources differ in their regulatory mechanisms and in their natural substrates. However, all known phosphorylases share catalytic and structural properties. The sequence is that of Glycogen phosphorylase, brain form (PYGB) from Bos taurus (Bovine).